A 1323-amino-acid polypeptide reads, in one-letter code: Traf2 and NCK-interacting protein kinase (1323 aa).

The Protein kinase domain maps to 25–289 (FELVELVGNG…TEQLMKHPFI (265 aa)). ATP-binding positions include 31-39 (VGNGTYGQV) and lysine 54. Catalysis depends on aspartate 153, which acts as the Proton acceptor. Threonine 187 carries the phosphothreonine modification. 3 disordered regions span residues 284–347 (MKHP…LPGE), 397–559 (EQKE…LRPV), and 571–838 (SQGP…NEQY). Residues 288-307 (FIRDQPNERQVRIQLKDHID) show a composition bias toward basic and acidic residues. Residues 290–1010 (RDQPNERQVR…EIRKYKKRFN (721 aa)) form a mediates interaction with NEDD4 region. Residues 317–335 (DETEYEYSGSEEEEEENDS) are compositionally biased toward acidic residues. 2 positions are modified to phosphoserine: serine 324 and serine 326. 3 stretches are compositionally biased toward basic and acidic residues: residues 397–470 (EQKE…ERDY), 477–494 (QRQE…HYKE), and 503–513 (AWAKEVEERSR). Phosphoserine is present on residues serine 531 and serine 541. The residue at position 552 (threonine 552) is a Phosphothreonine. Residues serine 571, serine 579, serine 581, and serine 611 each carry the phosphoserine modification. The span at 623–640 (RIEKFDRSSWLRQEEDIP) shows a compositional bias: basic and acidic residues. A phosphoserine mark is found at serine 649, serine 651, serine 659, serine 672, serine 678, serine 691, serine 735, serine 737, and serine 740. The segment covering 691–726 (SSLQRTSSGSSSSSSTPSSQPSSQGGSQPGSQAGSS) has biased composition (low complexity). Basic and acidic residues-rich tracts occupy residues 746-760 (EPSK…DITR) and 772-790 (KELR…KKVT). Residues 797–810 (EESESSEEEEEDGE) are compositionally biased toward acidic residues. Serine 922 is modified (phosphoserine). Residues 939-960 (FVDPRVYQTSPTDEDEEDDESS) form a disordered region. Residues 950 to 959 (TDEDEEDDES) are compositionally biased toward acidic residues. The 288-residue stretch at 1010-1297 (NSEILCAALW…KFLCERNDKV (288 aa)) folds into the CNH domain.

This sequence belongs to the protein kinase superfamily. STE Ser/Thr protein kinase family. STE20 subfamily. In terms of assembly, interacts (via the CNH domain) with RAP2A (GTP-bound form preferentially); the interaction is direct and required for the activation of TNIK by RAP2A. Interacts with NEDD4; recruits RAP2A to NEDD4. Interacts with TRAF2 and NCK. Interacts with TCF7L2/TCF4 and CTNNB1; the interaction is direct. Interacts with TANC1. In terms of processing, autophosphorylated. Autophosphorylation is activated by RAP2A and induces association to the cytoskeletal fraction.

The protein resides in the nucleus. It is found in the cytoplasm. Its subcellular location is the recycling endosome. It localises to the cytoskeleton. It catalyses the reaction L-seryl-[protein] + ATP = O-phospho-L-seryl-[protein] + ADP + H(+). The catalysed reaction is L-threonyl-[protein] + ATP = O-phospho-L-threonyl-[protein] + ADP + H(+). In terms of biological role, serine/threonine kinase that acts as an essential activator of the Wnt signaling pathway. Recruited to promoters of Wnt target genes and required to activate their expression. May act by phosphorylating TCF4/TCF7L2. Appears to act upstream of the JUN N-terminal pathway. May play a role in the response to environmental stress. Part of a signaling complex composed of NEDD4, RAP2A and TNIK which regulates neuronal dendrite extension and arborization during development. More generally, it may play a role in cytoskeletal rearrangements and regulate cell spreading. Phosphorylates SMAD1 on Thr-322. Activator of the Hippo signaling pathway which plays a pivotal role in organ size control and tumor suppression by restricting proliferation and promoting apoptosis. MAP4Ks act in parallel to and are partially redundant with STK3/MST2 and STK4/MST2 in the phosphorylation and activation of LATS1/2, and establish MAP4Ks as components of the expanded Hippo pathway. The sequence is that of Traf2 and NCK-interacting protein kinase (Tnik) from Mus musculus (Mouse).